A 195-amino-acid polypeptide reads, in one-letter code: CASP-like protein 1B1 (195 aa).

At 1–22 (MGLQNEEKLELGCTGLQPKPKK) the chain is on the cytoplasmic side. The helical transmembrane segment at 23-43 (WVLLMVRVVAFLATAAATLVM) threads the bilayer. At 44-75 (ALNKETKTLVVATVGNTPIKVTLTAKFQHTPA) the chain is on the extracellular side. Residues 76-96 (FVFFVIANGMASFHNLLMIMV) form a helical membrane-spanning segment. Over 97-109 (ELCGQKLDYKGMR) the chain is Cytoplasmic. A helical transmembrane segment spans residues 110–130 (LAMVAILDMMTVALVSGGASA). Residues 131–163 (ATFMAELGKNGNSHARWDKICDKFETFCDHGGA) lie on the Extracellular side of the membrane. The chain crosses the membrane as a helical span at residues 164 to 184 (ALIASSAGLILMMIISVMSIM). Residues 185–195 (KLLIKPKSDSS) are Cytoplasmic-facing.

It belongs to the Casparian strip membrane proteins (CASP) family. Homodimer and heterodimers.

The protein localises to the cell membrane. This Populus trichocarpa (Western balsam poplar) protein is CASP-like protein 1B1.